Consider the following 249-residue polypeptide: Ribonuclease 3 (249 aa).

The 129-residue stretch at 21 to 149 (VDHQPLIDAL…LLGAIYLAHG (129 aa)) folds into the RNase III domain. Glu62 serves as a coordination point for Mg(2+). Asp66 is a catalytic residue. The Mg(2+) site is built by Asp135 and Glu138. Residue Glu138 is part of the active site. In terms of domain architecture, DRBM spans 176-244 (DWKTTLQERL…AHKAVGFLQD (69 aa)).

It belongs to the ribonuclease III family. Homodimer. Requires Mg(2+) as cofactor.

It localises to the cytoplasm. The catalysed reaction is Endonucleolytic cleavage to 5'-phosphomonoester.. Its function is as follows. Digests double-stranded RNA. Involved in the processing of primary rRNA transcript to yield the immediate precursors to the large and small rRNAs (23S and 16S). Processes some mRNAs, and tRNAs when they are encoded in the rRNA operon. Processes pre-crRNA and tracrRNA of type II CRISPR loci if present in the organism. This chain is Ribonuclease 3, found in Corynebacterium diphtheriae (strain ATCC 700971 / NCTC 13129 / Biotype gravis).